The following is a 718-amino-acid chain: Pullulanase (718 aa).

Catalysis depends on aspartate 406, which acts as the Nucleophile. Residue glutamate 435 is the Proton donor of the active site.

It belongs to the glycosyl hydrolase 13 family.

The catalysed reaction is Hydrolysis of (1-&gt;6)-alpha-D-glucosidic linkages in pullulan, amylopectin and glycogen, and in the alpha- and beta-limit dextrins of amylopectin and glycogen.. The polypeptide is Pullulanase (amyX) (Bacillus subtilis (strain 168)).